A 242-amino-acid polypeptide reads, in one-letter code: 4-hydroxy-tetrahydrodipicolinate reductase (242 aa).

NAD(+) is bound by residues 8-13 (GSNGRM), 75-77 (GTT), and 99-102 (ATNM). The Proton donor/acceptor role is filled by histidine 131. Position 132 (histidine 132) interacts with (S)-2,3,4,5-tetrahydrodipicolinate. The active-site Proton donor is the lysine 135. 141-142 (GT) provides a ligand contact to (S)-2,3,4,5-tetrahydrodipicolinate.

It belongs to the DapB family.

The protein localises to the cytoplasm. It carries out the reaction (S)-2,3,4,5-tetrahydrodipicolinate + NAD(+) + H2O = (2S,4S)-4-hydroxy-2,3,4,5-tetrahydrodipicolinate + NADH + H(+). The enzyme catalyses (S)-2,3,4,5-tetrahydrodipicolinate + NADP(+) + H2O = (2S,4S)-4-hydroxy-2,3,4,5-tetrahydrodipicolinate + NADPH + H(+). Its pathway is amino-acid biosynthesis; L-lysine biosynthesis via DAP pathway; (S)-tetrahydrodipicolinate from L-aspartate: step 4/4. Catalyzes the conversion of 4-hydroxy-tetrahydrodipicolinate (HTPA) to tetrahydrodipicolinate. This chain is 4-hydroxy-tetrahydrodipicolinate reductase, found in Campylobacter lari (strain RM2100 / D67 / ATCC BAA-1060).